The chain runs to 551 residues: Tetrachloroethene reductive dehalogenase (551 aa).

The tat-type signal signal peptide spans methionine 1–alanine 39. Residues proline 411–aspartate 440 form the 4Fe-4S ferredoxin-type 1 domain. Residues cysteine 420, cysteine 423, cysteine 426, cysteine 430, cysteine 467, cysteine 478, cysteine 481, and cysteine 485 each coordinate [4Fe-4S] cluster. Residues cysteine 478–aspartate 496 form the 4Fe-4S ferredoxin-type 2 domain.

It belongs to the PceA family. It depends on [4Fe-4S] cluster as a cofactor. Corrinoid serves as cofactor. Predicted to be exported by the Tat system. The position of the signal peptide cleavage has not been experimentally proven.

The protein localises to the cell membrane. It catalyses the reaction trichloroethene + chloride + A + H(+) = tetrachloroethene + AH2. It carries out the reaction trichloroethene + AH2 = (Z)-1,2-dichloroethene + chloride + A + H(+). Its function is as follows. Catalyzes the reductive dechlorination of tetrachloroethene (PCE) to trichloroethene (TCE) and of trichloroethene to cis-1,2-dichloroethene (DCE). This chain is Tetrachloroethene reductive dehalogenase, found in Desulfitobacterium hafniense (Desulfitobacterium frappieri).